Reading from the N-terminus, the 374-residue chain is Flavonoid O-methyltransferase-like protein Os11g0303600 (374 aa).

Residues Asp242, Asp262, Met263, and Lys276 each coordinate S-adenosyl-L-homocysteine. His280 acts as the Proton acceptor in catalysis.

The protein belongs to the class I-like SAM-binding methyltransferase superfamily. Cation-independent O-methyltransferase family. COMT subfamily.

The polypeptide is Flavonoid O-methyltransferase-like protein Os11g0303600 (Oryza sativa subsp. japonica (Rice)).